The sequence spans 492 residues: Steroid 21-hydroxylase (492 aa).

R91 and K120 together coordinate heme b. R231 contributes to the 17alpha-hydroxyprogesterone binding site. Position 231 (R231) interacts with progesterone. 3 residues coordinate heme b: H363, R424, and C426.

This sequence belongs to the cytochrome P450 family. The cofactor is heme b.

It localises to the endoplasmic reticulum membrane. It is found in the microsome membrane. The catalysed reaction is 17alpha-hydroxyprogesterone + reduced [NADPH--hemoprotein reductase] + O2 = 11-deoxycortisol + oxidized [NADPH--hemoprotein reductase] + H2O + H(+). It carries out the reaction progesterone + reduced [NADPH--hemoprotein reductase] + O2 = 21-hydroxyprogesterone + oxidized [NADPH--hemoprotein reductase] + H2O + H(+). Functionally, specifically catalyzes the 21-hydroxylation of steroids. Required for the adrenal synthesis of mineralocorticoids and glucocorticoids. This chain is Steroid 21-hydroxylase (CYP21), found in Canis lupus familiaris (Dog).